Here is a 52-residue protein sequence, read N- to C-terminus: NADH dehydrogenase [ubiquinone] 1 alpha subcomplex subunit 4 homolog (52 aa).

Residues 14-30 (LYPLGAAVATAVGFATY) form a helical membrane-spanning segment.

It belongs to the complex I NDUFA4 subunit family.

The protein resides in the mitochondrion inner membrane. Functionally, accessory subunit of the mitochondrial membrane respiratory chain NADH dehydrogenase (Complex I), that is believed to be not involved in catalysis. Complex I functions in the transfer of electrons from NADH to the respiratory chain. The immediate electron acceptor for the enzyme is believed to be ubiquinone. The sequence is that of NADH dehydrogenase [ubiquinone] 1 alpha subcomplex subunit 4 homolog from Schizosaccharomyces pombe (strain 972 / ATCC 24843) (Fission yeast).